The sequence spans 387 residues: Patatin-01 (387 aa).

An N-terminal signal peptide occupies residues 1-23 (MATTKSFLILSVMILATTSSTFA). The PNPLA domain maps to 32–230 (LSIDGGGIKG…TVADPALLSV (199 aa)). The GXGXXG signature appears at 36–41 (GGGIKG). The short motif at 75 to 79 (GTSTG) is the GXSXG element. The Nucleophile role is filled by Ser-77. An N-linked (GlcNAc...) asparagine glycan is attached at Asn-115. Asp-216 functions as the Proton acceptor in the catalytic mechanism. The short motif at 216 to 218 (DGA) is the DGA/G element. Positions 361 to 385 (ETYEEALKRFAKLLSDRKKLRANKA) form a coiled coil.

Belongs to the patatin family. In terms of tissue distribution, tuber.

It localises to the vacuole. In terms of biological role, probable lipolytic acyl hydrolase (LAH), an activity which is thought to be involved in the response of tubers to pathogens. The protein is Patatin-01 of Solanum tuberosum (Potato).